We begin with the raw amino-acid sequence, 176 residues long: 2-oxo-4-hydroxy-4-carboxy-5-ureidoimidazoline decarboxylase (176 aa).

The Proton donor; for OHCU decarboxylase activity role is filled by His-70. Residues Pro-71, 83–87 (SQEEQ), and 118–122 (FIMAV) contribute to the substrate site. Residues 72-96 (DLGERTEMTDESQEEQASAGLDRLP) form a disordered region.

The protein belongs to the OHCU decarboxylase family.

It carries out the reaction 5-hydroxy-2-oxo-4-ureido-2,5-dihydro-1H-imidazole-5-carboxylate + H(+) = (S)-allantoin + CO2. It functions in the pathway purine metabolism; urate degradation; (S)-allantoin from urate: step 3/3. Its function is as follows. Catalyzes the stereoselective decarboxylation of 2-oxo-4-hydroxy-4-carboxy-5-ureidoimidazoline (OHCU) to (S)-allantoin. This Halalkalicoccus jeotgali (strain DSM 18796 / CECT 7217 / JCM 14584 / KCTC 4019 / B3) protein is 2-oxo-4-hydroxy-4-carboxy-5-ureidoimidazoline decarboxylase.